A 41-amino-acid chain; its full sequence is Photosystem II reaction center protein Y (41 aa).

Residues 4–22 traverse the membrane as a helical segment; it reads LIVVVLPILAAVTWVVFNI.

It belongs to the PsbY family. PSII is composed of 1 copy each of membrane proteins PsbA, PsbB, PsbC, PsbD, PsbE, PsbF, PsbH, PsbI, PsbJ, PsbK, PsbL, PsbM, PsbT, PsbX, PsbY, Psb30/Ycf12, peripheral proteins PsbO, CyanoQ (PsbQ), PsbU, PsbV and a large number of cofactors. It forms dimeric complexes.

Its subcellular location is the cellular thylakoid membrane. Its function is as follows. Loosely associated component of the core of photosystem II (PSII), it is not always seen in crystals. PSII is a light-driven water plastoquinone oxidoreductase, using light energy to abstract electrons from H(2)O, generating a proton gradient subsequently used for ATP formation. The polypeptide is Photosystem II reaction center protein Y (Prochlorococcus marinus (strain MIT 9211)).